The sequence spans 561 residues: Mercuric reductase (561 aa).

In terms of domain architecture, HMA spans 1–65 (MTTLKITGMT…AVAGLGYEAT (65 aa)). A metal cation is bound by residues Cys-11 and Cys-14. FAD is bound by residues Ala-110, Gly-130, and Thr-135. Residues Cys-136 and Cys-141 are joined by a disulfide bond. FAD is bound by residues Lys-145, Ala-211, Asp-403, and Val-411. The Hg(2+) site is built by Cys-558 and Cys-559.

It belongs to the class-I pyridine nucleotide-disulfide oxidoreductase family. As to quaternary structure, homodimer. The cofactor is FAD.

It catalyses the reaction Hg + NADP(+) + H(+) = Hg(2+) + NADPH. Functionally, resistance to Hg(2+) in bacteria appears to be governed by a specialized system which includes mercuric reductase. MerA protein is responsible for volatilizing mercury as Hg(0). In Enterobacter agglomerans (Erwinia herbicola), this protein is Mercuric reductase (merA).